Consider the following 584-residue polypeptide: MRTHYCADVNEQHIGETVTVAGWVASRRDHGGVIFIDLRDKDEVFQLVCDPADNADAHKIAEEVRDQFVLIATGKVRARGEGLENPNLKTGKVEMVVDSLTIENRSKPMPFELNDEKVNEEIKLKYRYLELRTQKAYDTFKLRSKATIATRNALDELGFLEVETPILTKSTPEGARDYLVPSRVHGGEFYALPQSPQLFKQLLMVGGFDRYFQIAKCFRDEDLRADRQPEFTQIDVEMSFCDQEDVITVAEKLISDVFIKCGFDVPTKFNRMTHSEAMEKYGSDKPDMRYDLAMVDVIDIFERCDNEIFSGIAKMPKKNRIKALRVPKGDEIFSKRQMKGFEDYVRKFGAQGLGYFQMKEDGLKGPLTKFFTEDDIQAIIDRCGLEVGDAVFFGAGEKKLVWDYMGRFRIYLAETMDIIPEDTFEFLWVMDFPMFEVEDGKVKALHHPFTQPKSLDFNDIEEIESIAYDVVLNGTELGGGSIRIHKEDVQEEVFKLLGISEEEAQSKFGFLLDALKFGAPPHGGFALGLDRMIMIMTGASSIRDVIAFPKTQKAQCLLTQAPSEVDNEQLKELSIRVRQAAPTA.

Glu-173 provides a ligand contact to L-aspartate. Residues 197–200 are aspartate; sequence QLFK. Arg-219 is an L-aspartate binding site. Residues 219 to 221 and Gln-228 contribute to the ATP site; that span reads RDE. His-446 lines the L-aspartate pocket. Glu-476 is a binding site for ATP. Position 483 (Arg-483) interacts with L-aspartate. 528–531 is an ATP binding site; the sequence is GLDR.

The protein belongs to the class-II aminoacyl-tRNA synthetase family. Type 1 subfamily. Homodimer.

It is found in the cytoplasm. It carries out the reaction tRNA(Asx) + L-aspartate + ATP = L-aspartyl-tRNA(Asx) + AMP + diphosphate. In terms of biological role, aspartyl-tRNA synthetase with relaxed tRNA specificity since it is able to aspartylate not only its cognate tRNA(Asp) but also tRNA(Asn). Reaction proceeds in two steps: L-aspartate is first activated by ATP to form Asp-AMP and then transferred to the acceptor end of tRNA(Asp/Asn). This Sulfurovum sp. (strain NBC37-1) protein is Aspartate--tRNA(Asp/Asn) ligase.